Reading from the N-terminus, the 468-residue chain is Argininosuccinate lyase (468 aa).

Belongs to the lyase 1 family. Argininosuccinate lyase subfamily.

The protein resides in the cytoplasm. The catalysed reaction is 2-(N(omega)-L-arginino)succinate = fumarate + L-arginine. It participates in amino-acid biosynthesis; L-arginine biosynthesis; L-arginine from L-ornithine and carbamoyl phosphate: step 3/3. In Paraburkholderia xenovorans (strain LB400), this protein is Argininosuccinate lyase.